The primary structure comprises 211 residues: Dual specificity protein phosphatase 26 (211 aa).

Positions asparagine 60–glutamine 207 constitute a Tyrosine-protein phosphatase domain. Cysteine 152 functions as the Phosphocysteine intermediate in the catalytic mechanism.

It belongs to the protein-tyrosine phosphatase family. Non-receptor class dual specificity subfamily. Interacts with HSF4.

The protein localises to the cytoplasm. It is found in the nucleus. It localises to the golgi apparatus. It carries out the reaction O-phospho-L-tyrosyl-[protein] + H2O = L-tyrosyl-[protein] + phosphate. It catalyses the reaction O-phospho-L-seryl-[protein] + H2O = L-seryl-[protein] + phosphate. The catalysed reaction is O-phospho-L-threonyl-[protein] + H2O = L-threonyl-[protein] + phosphate. Functionally, inactivates MAPK1 and MAPK3 which leads to dephosphorylation of heat shock factor protein 4 and a reduction in its DNA-binding activity. The sequence is that of Dual specificity protein phosphatase 26 (DUSP26) from Bos taurus (Bovine).